The following is a 451-amino-acid chain: CBL-interacting protein kinase 22 (451 aa).

The Protein kinase domain maps to 26–301 (YELGRVLGQG…IGEIFDHPWL (276 aa)). ATP is bound by residues 32 to 40 (LGQGASSKV) and Lys-55. Residue Asp-165 is the Proton acceptor of the active site. The segment at 183–216 (DFGLSAFADADQHLGATDGLAATHCGSPAYVAPE) is activation loop. An NAF domain is found at 330–356 (ELEQAMELNAFDIIGFASGCDLSGLIG). Residues 361–389 (RVRFVLPGGDSKSVLDKVEKLGREEGLVV) are PPI.

This sequence belongs to the protein kinase superfamily. CAMK Ser/Thr protein kinase family. SNF1 subfamily. Requires Mn(2+) as cofactor.

The catalysed reaction is L-seryl-[protein] + ATP = O-phospho-L-seryl-[protein] + ADP + H(+). It carries out the reaction L-threonyl-[protein] + ATP = O-phospho-L-threonyl-[protein] + ADP + H(+). Functionally, CIPK serine-threonine protein kinases interact with CBL proteins. Binding of a CBL protein to the regulatory NAF domain of CIPK protein lead to the activation of the kinase in a calcium-dependent manner. In Oryza sativa subsp. japonica (Rice), this protein is CBL-interacting protein kinase 22 (CIPK22).